A 441-amino-acid chain; its full sequence is Glutamyl-tRNA reductase (441 aa).

Residues 49 to 52 (TCNR), Ser-109, 114 to 116 (EDQ), and Gln-120 each bind substrate. Residue Cys-50 is the Nucleophile of the active site. NADP(+) is bound at residue 190 to 195 (GAGKMS).

Belongs to the glutamyl-tRNA reductase family. In terms of assembly, homodimer.

It carries out the reaction (S)-4-amino-5-oxopentanoate + tRNA(Glu) + NADP(+) = L-glutamyl-tRNA(Glu) + NADPH + H(+). The protein operates within porphyrin-containing compound metabolism; protoporphyrin-IX biosynthesis; 5-aminolevulinate from L-glutamyl-tRNA(Glu): step 1/2. In terms of biological role, catalyzes the NADPH-dependent reduction of glutamyl-tRNA(Glu) to glutamate 1-semialdehyde (GSA). The sequence is that of Glutamyl-tRNA reductase from Moorella thermoacetica (strain ATCC 39073 / JCM 9320).